The chain runs to 22 residues: Rothein 4.1 (22 aa).

This sequence belongs to the frog skin active peptide (FSAP) family. Rothein subfamily. In terms of tissue distribution, expressed by the skin dorsal glands.

The protein localises to the secreted. Its function is as follows. Lacks antimicrobial activity. Does not inhibit the formation of NO by neuronal nitric oxide. The protein is Rothein 4.1 of Litoria rothii (Roth's tree frog).